The chain runs to 259 residues: uncharacterized protein (259 aa).

An N-terminal signal peptide occupies residues 1-22 (MKHSSKIIVFVSFLILTIFIGG). Cysteine 23 carries N-palmitoyl cysteine lipidation. Cysteine 23 carries the S-diacylglycerol cysteine lipid modification.

It belongs to the staphylococcal tandem lipoprotein family.

Its subcellular location is the cell membrane. This is an uncharacterized protein from Staphylococcus epidermidis (strain ATCC 35984 / DSM 28319 / BCRC 17069 / CCUG 31568 / BM 3577 / RP62A).